Reading from the N-terminus, the 119-residue chain is Large ribosomal subunit protein bL20 (119 aa).

This sequence belongs to the bacterial ribosomal protein bL20 family.

Binds directly to 23S ribosomal RNA and is necessary for the in vitro assembly process of the 50S ribosomal subunit. It is not involved in the protein synthesizing functions of that subunit. The protein is Large ribosomal subunit protein bL20 of Thiobacillus denitrificans (strain ATCC 25259 / T1).